The following is a 474-amino-acid chain: Protein nucleotidyltransferase YdiU (474 aa).

Positions 89, 91, 92, 112, 124, 125, 178, and 185 each coordinate ATP. Asp262 acts as the Proton acceptor in catalysis. Mg(2+)-binding residues include Asn263 and Asp272. Asp272 contributes to the ATP binding site.

It belongs to the SELO family. Requires Mg(2+) as cofactor. Mn(2+) is required as a cofactor.

It carries out the reaction L-seryl-[protein] + ATP = 3-O-(5'-adenylyl)-L-seryl-[protein] + diphosphate. The catalysed reaction is L-threonyl-[protein] + ATP = 3-O-(5'-adenylyl)-L-threonyl-[protein] + diphosphate. It catalyses the reaction L-tyrosyl-[protein] + ATP = O-(5'-adenylyl)-L-tyrosyl-[protein] + diphosphate. The enzyme catalyses L-histidyl-[protein] + UTP = N(tele)-(5'-uridylyl)-L-histidyl-[protein] + diphosphate. It carries out the reaction L-seryl-[protein] + UTP = O-(5'-uridylyl)-L-seryl-[protein] + diphosphate. The catalysed reaction is L-tyrosyl-[protein] + UTP = O-(5'-uridylyl)-L-tyrosyl-[protein] + diphosphate. In terms of biological role, nucleotidyltransferase involved in the post-translational modification of proteins. It can catalyze the addition of adenosine monophosphate (AMP) or uridine monophosphate (UMP) to a protein, resulting in modifications known as AMPylation and UMPylation. This is Protein nucleotidyltransferase YdiU from Trichodesmium erythraeum (strain IMS101).